A 214-amino-acid chain; its full sequence is Adenylate kinase (214 aa).

10-15 (GAGKGT) is a binding site for ATP. An NMP region spans residues 30 to 59 (STGDMLRAAVKAGSELGLKAKEIMDAGKLV). AMP is bound by residues threonine 31, arginine 36, 57–59 (KLV), 85–88 (GFPR), and glutamine 92. The LID stretch occupies residues 122–159 (GRRVHAASGRVYHVKFNPPKVEDKDDVTGEDLTIRKDD). ATP is bound by residues arginine 123 and 132–133 (VY). AMP-binding residues include arginine 156 and arginine 167. Residue arginine 200 participates in ATP binding.

The protein belongs to the adenylate kinase family. As to quaternary structure, monomer.

The protein localises to the cytoplasm. It carries out the reaction AMP + ATP = 2 ADP. It participates in purine metabolism; AMP biosynthesis via salvage pathway; AMP from ADP: step 1/1. In terms of biological role, catalyzes the reversible transfer of the terminal phosphate group between ATP and AMP. Plays an important role in cellular energy homeostasis and in adenine nucleotide metabolism. In Yersinia enterocolitica serotype O:8 / biotype 1B (strain NCTC 13174 / 8081), this protein is Adenylate kinase.